The primary structure comprises 274 residues: uncharacterized protein (274 aa).

This sequence belongs to the class IV-like SAM-binding methyltransferase superfamily. RNA methyltransferase TrmH family.

This is an uncharacterized protein from Synechocystis sp. (strain ATCC 27184 / PCC 6803 / Kazusa).